Reading from the N-terminus, the 184-residue chain is Transmembrane protein 140 (184 aa).

The Cytoplasmic portion of the chain corresponds to Met1 to Ser12. Residues Phe13–Trp33 traverse the membrane as a helical segment. At Lys34–Arg83 the chain is on the extracellular side. A glycan (N-linked (GlcNAc...) asparagine) is linked at Asn37. A helical transmembrane segment spans residues Leu84–Gln104. Residues Cys105–Gly117 lie on the Cytoplasmic side of the membrane. The helical transmembrane segment at Phe118–Trp138 threads the bilayer. Residues Lys139–Gly149 are Extracellular-facing. A helical membrane pass occupies residues Phe150–Phe170. Residues Pro171–Cys184 are Cytoplasmic-facing.

Its subcellular location is the membrane. The protein is Transmembrane protein 140 (Tmem140) of Rattus norvegicus (Rat).